A 321-amino-acid polypeptide reads, in one-letter code: Glucokinase (321 aa).

Residue 8–13 (GDVGGT) participates in ATP binding.

The protein belongs to the bacterial glucokinase family.

It is found in the cytoplasm. It carries out the reaction D-glucose + ATP = D-glucose 6-phosphate + ADP + H(+). The chain is Glucokinase from Salmonella schwarzengrund (strain CVM19633).